The chain runs to 178 residues: Cytochrome c-type biogenesis protein CcmE (178 aa).

The Cytoplasmic portion of the chain corresponds to 1-8 (MNPRRKKR). The helical; Signal-anchor for type II membrane protein transmembrane segment at 9–29 (LAIVGSILIGIGVVSGLVLYA) threads the bilayer. Residues 30–178 (LSQNIDLFFT…QLESKKTNSY (149 aa)) are Periplasmic-facing. H143 and Y147 together coordinate heme. The disordered stretch occupies residues 154-178 (EAAGQKHDKATYSDKQLESKKTNSY). Over residues 157–178 (GQKHDKATYSDKQLESKKTNSY) the composition is skewed to basic and acidic residues.

This sequence belongs to the CcmE/CycJ family.

It is found in the cell inner membrane. In terms of biological role, heme chaperone required for the biogenesis of c-type cytochromes. Transiently binds heme delivered by CcmC and transfers the heme to apo-cytochromes in a process facilitated by CcmF and CcmH. The protein is Cytochrome c-type biogenesis protein CcmE of Colwellia psychrerythraea (strain 34H / ATCC BAA-681) (Vibrio psychroerythus).